The sequence spans 259 residues: Protein SODIUM POTASSIUM ROOT DEFECTIVE 2 (259 aa).

Residues 141–165 (PDSITGSVDQDPAKTVEAEAPAGED) are disordered. Basic and acidic residues predominate over residues 151–165 (DPAKTVEAEAPAGED). Residues 180–246 (QQVVVLKVSL…KVKNAQFWTN (67 aa)) enclose the HMA domain. The a metal cation site is built by C191 and C194.

The protein is Protein SODIUM POTASSIUM ROOT DEFECTIVE 2 of Arabidopsis thaliana (Mouse-ear cress).